Reading from the N-terminus, the 59-residue chain is uncharacterized protein (59 aa).

This is an uncharacterized protein from Bacillus subtilis (strain 168).